The following is a 163-amino-acid chain: ATP synthase subunit b 1 (163 aa).

The helical transmembrane segment at 7–27 threads the bilayer; that stretch reads AETWVAIAFVILMGIFAYLGV.

This sequence belongs to the ATPase B chain family. In terms of assembly, F-type ATPases have 2 components, F(1) - the catalytic core - and F(0) - the membrane proton channel. F(1) has five subunits: alpha(3), beta(3), gamma(1), delta(1), epsilon(1). F(0) has three main subunits: a(1), b(2) and c(10-14). The alpha and beta chains form an alternating ring which encloses part of the gamma chain. F(1) is attached to F(0) by a central stalk formed by the gamma and epsilon chains, while a peripheral stalk is formed by the delta and b chains.

Its subcellular location is the cell inner membrane. Functionally, f(1)F(0) ATP synthase produces ATP from ADP in the presence of a proton or sodium gradient. F-type ATPases consist of two structural domains, F(1) containing the extramembraneous catalytic core and F(0) containing the membrane proton channel, linked together by a central stalk and a peripheral stalk. During catalysis, ATP synthesis in the catalytic domain of F(1) is coupled via a rotary mechanism of the central stalk subunits to proton translocation. In terms of biological role, component of the F(0) channel, it forms part of the peripheral stalk, linking F(1) to F(0). In Rhodopseudomonas palustris (strain HaA2), this protein is ATP synthase subunit b 1.